A 432-amino-acid polypeptide reads, in one-letter code: Enolase (432 aa).

Glutamine 167 is a binding site for (2R)-2-phosphoglycerate. Glutamate 209 serves as the catalytic Proton donor. Aspartate 246, glutamate 291, and aspartate 318 together coordinate Mg(2+). (2R)-2-phosphoglycerate-binding residues include lysine 343, arginine 372, serine 373, and lysine 394. The active-site Proton acceptor is the lysine 343.

It belongs to the enolase family. In terms of assembly, component of the RNA degradosome, a multiprotein complex involved in RNA processing and mRNA degradation. Mg(2+) is required as a cofactor.

The protein resides in the cytoplasm. The protein localises to the secreted. Its subcellular location is the cell surface. It carries out the reaction (2R)-2-phosphoglycerate = phosphoenolpyruvate + H2O. The protein operates within carbohydrate degradation; glycolysis; pyruvate from D-glyceraldehyde 3-phosphate: step 4/5. Functionally, catalyzes the reversible conversion of 2-phosphoglycerate (2-PG) into phosphoenolpyruvate (PEP). It is essential for the degradation of carbohydrates via glycolysis. This is Enolase from Colwellia psychrerythraea (strain 34H / ATCC BAA-681) (Vibrio psychroerythus).